Reading from the N-terminus, the 120-residue chain is Nitrogen regulatory protein GlnK1 (120 aa).

ADP-binding positions include threonine 40, 48-50, valine 75, and 98-101; these read GEQ and GDGR. ATP contacts are provided by residues threonine 40, 48–50, valine 75, and 98–101; these read GEQ and GDGR.

This sequence belongs to the P(II) protein family. Homotrimer. Interacts and forms a complex with Amt1.

The protein localises to the cytoplasm. Involved in the regulation of nitrogen metabolism. Regulates the activity of its targets by protein-protein interaction in response to the nitrogen status of the cell. Regulates the activity of the ammonia channel Amt1 via direct interaction. The protein is Nitrogen regulatory protein GlnK1 of Archaeoglobus fulgidus (strain ATCC 49558 / DSM 4304 / JCM 9628 / NBRC 100126 / VC-16).